A 430-amino-acid polypeptide reads, in one-letter code: Adenylosuccinate synthetase (430 aa).

GTP-binding positions include 12–18 and 40–42; these read GDEGKGK and GHT. The active-site Proton acceptor is the aspartate 13. Mg(2+)-binding residues include aspartate 13 and glycine 40. Residues 13–16, 38–41, threonine 128, arginine 142, glutamine 223, threonine 238, and arginine 302 each bind IMP; these read DEGK and NAGH. The Proton donor role is filled by histidine 41. 298 to 304 is a binding site for substrate; the sequence is TTTGRPR. GTP contacts are provided by residues arginine 304, 330–332, and 412–414; these read LLD and SVG.

This sequence belongs to the adenylosuccinate synthetase family. In terms of assembly, homodimer. The cofactor is Mg(2+).

It is found in the cytoplasm. It carries out the reaction IMP + L-aspartate + GTP = N(6)-(1,2-dicarboxyethyl)-AMP + GDP + phosphate + 2 H(+). The protein operates within purine metabolism; AMP biosynthesis via de novo pathway; AMP from IMP: step 1/2. Its function is as follows. Plays an important role in the de novo pathway of purine nucleotide biosynthesis. Catalyzes the first committed step in the biosynthesis of AMP from IMP. This chain is Adenylosuccinate synthetase, found in Listeria monocytogenes serotype 4b (strain CLIP80459).